Consider the following 594-residue polypeptide: ATP-dependent zinc metalloprotease FtsH 1 (594 aa).

The Cytoplasmic segment spans residues 1 to 2; that stretch reads MR. A helical transmembrane segment spans residues 3-23; it reads WWAGAALLLAALLFGRPAAAM. Topologically, residues 24–92 are extracellular; the sequence is EAQPVAYSEF…RVEFVRPADP (69 aa). A helical membrane pass occupies residues 93–113; the sequence is IAFRTLLRFIPPLLILGAILW. Over 114-594 the chain is Cytoplasmic; sequence FTRRTAGGSG…ANSRGDEGNQ (481 aa). 186-193 contacts ATP; it reads GPPGTGKT. Zn(2+) is bound at residue H408. E409 is a catalytic residue. Residues H412 and D485 each contribute to the Zn(2+) site.

The protein in the central section; belongs to the AAA ATPase family. In the C-terminal section; belongs to the peptidase M41 family. In terms of assembly, homohexamer. Zn(2+) is required as a cofactor.

The protein localises to the cell membrane. In terms of biological role, acts as a processive, ATP-dependent zinc metallopeptidase for both cytoplasmic and membrane proteins. Plays a role in the quality control of integral membrane proteins. This Symbiobacterium thermophilum (strain DSM 24528 / JCM 14929 / IAM 14863 / T) protein is ATP-dependent zinc metalloprotease FtsH 1.